A 517-amino-acid polypeptide reads, in one-letter code: Bifunctional purine biosynthesis protein PurH (517 aa).

Residues 1–146 (MGRLVLLSVS…KNFAHLTVLC (146 aa)) form the MGS-like domain.

The protein belongs to the PurH family.

The enzyme catalyses (6R)-10-formyltetrahydrofolate + 5-amino-1-(5-phospho-beta-D-ribosyl)imidazole-4-carboxamide = 5-formamido-1-(5-phospho-D-ribosyl)imidazole-4-carboxamide + (6S)-5,6,7,8-tetrahydrofolate. It carries out the reaction IMP + H2O = 5-formamido-1-(5-phospho-D-ribosyl)imidazole-4-carboxamide. It participates in purine metabolism; IMP biosynthesis via de novo pathway; 5-formamido-1-(5-phospho-D-ribosyl)imidazole-4-carboxamide from 5-amino-1-(5-phospho-D-ribosyl)imidazole-4-carboxamide (10-formyl THF route): step 1/1. It functions in the pathway purine metabolism; IMP biosynthesis via de novo pathway; IMP from 5-formamido-1-(5-phospho-D-ribosyl)imidazole-4-carboxamide: step 1/1. The polypeptide is Bifunctional purine biosynthesis protein PurH (Gloeothece citriformis (strain PCC 7424) (Cyanothece sp. (strain PCC 7424))).